The sequence spans 386 residues: WD repeat-containing protein 89 (386 aa).

WD repeat units lie at residues 21–65 (KEPT…VIRE), 68–106 (GYPGLNGVKFANSHDSVYSSCTDGTVKCWDARLASGKPV), 111–155 (GYPS…QDLS), 167–207 (THSD…EDDA), 213–253 (NSVS…TDEP), and 318–357 (GHAATVRSFCWNMQDDSLLTGGEDAQLLLWKPGAVEKTFT).

This is WD repeat-containing protein 89 (WDR89) from Bos taurus (Bovine).